Here is a 203-residue protein sequence, read N- to C-terminus: Glycerol-3-phosphate acyltransferase (203 aa).

Transmembrane regions (helical) follow at residues 4–24 (LALIMTMAAYLLGSISSAVLI), 68–88 (IPVWGGYFLGIDPIILGVIAI), 117–137 (PIGLDLTGLVMLTWLSVAVLF), and 155–175 (TWMFKPQYTLPVAMLCCLIVF).

It belongs to the PlsY family. Probably interacts with PlsX.

It localises to the cell inner membrane. It catalyses the reaction an acyl phosphate + sn-glycerol 3-phosphate = a 1-acyl-sn-glycero-3-phosphate + phosphate. Its pathway is lipid metabolism; phospholipid metabolism. Catalyzes the transfer of an acyl group from acyl-phosphate (acyl-PO(4)) to glycerol-3-phosphate (G3P) to form lysophosphatidic acid (LPA). This enzyme utilizes acyl-phosphate as fatty acyl donor, but not acyl-CoA or acyl-ACP. This is Glycerol-3-phosphate acyltransferase from Vibrio campbellii (strain ATCC BAA-1116).